A 1013-amino-acid chain; its full sequence is Hemoglobin-binding protein A (1013 aa).

The first 24 residues, 1-24, serve as a signal peptide directing secretion; that stretch reads MTNFKFSLLACSIAFALNASTAYA. 8 consecutive repeat copies span residues 26 to 29, 30 to 33, 34 to 37, 38 to 41, 42 to 45, 46 to 49, 50 to 53, and 54 to 57. The interval 26–57 is 8 X 4 AA tandem repeats of Q-P-T-N; the sequence is QPTNQPTNQPTNQPTNQPTNQPTNQPTNQPTN. Low complexity predominate over residues 26-58; it reads QPTNQPTNQPTNQPTNQPTNQPTNQPTNQPTNQ. Residues 26–61 are disordered; the sequence is QPTNQPTNQPTNQPTNQPTNQPTNQPTNQPTNQDSN. The TonB box signature appears at 67–74; it reads EQINVSGS. Residues 78-205 form the TBDR plug domain; that stretch reads SDSKTPPKIA…LGGSVIYKTK (128 aa). In terms of domain architecture, TBDR beta-barrel spans 213-1013; it reads NKDYYVSYKK…NYKMSVQFEF (801 aa). The TonB C-terminal box signature appears at 996–1013; it reads NRFYAPGRNYKMSVQFEF.

This sequence belongs to the TonB-dependent receptor family. Hemoglobin/haptoglobin binding protein subfamily.

Its subcellular location is the cell outer membrane. Acts as a receptor for hemoglobin of the human host and is required for heme uptake. The sequence is that of Hemoglobin-binding protein A (hgbA) from Haemophilus influenzae.